The sequence spans 271 residues: 2,3,4,5-tetrahydropyridine-2,6-dicarboxylate N-succinyltransferase (271 aa).

Residues Arg-103 and Asp-140 each contribute to the substrate site.

It belongs to the transferase hexapeptide repeat family. As to quaternary structure, homotrimer.

The protein resides in the cytoplasm. The catalysed reaction is (S)-2,3,4,5-tetrahydrodipicolinate + succinyl-CoA + H2O = (S)-2-succinylamino-6-oxoheptanedioate + CoA. The protein operates within amino-acid biosynthesis; L-lysine biosynthesis via DAP pathway; LL-2,6-diaminopimelate from (S)-tetrahydrodipicolinate (succinylase route): step 1/3. In Methylococcus capsulatus (strain ATCC 33009 / NCIMB 11132 / Bath), this protein is 2,3,4,5-tetrahydropyridine-2,6-dicarboxylate N-succinyltransferase.